Consider the following 150-residue polypeptide: Ribonuclease K6 (150 aa).

The signal sequence occupies residues 1–23 (MVLCFPLLLLVLVLWGQVCPLHA). The active-site Proton acceptor is histidine 38. 4 disulfides stabilise this stretch: cysteine 46–cysteine 104, cysteine 60–cysteine 114, cysteine 78–cysteine 129, and cysteine 85–cysteine 92. Asparagine 55 is a glycosylation site (N-linked (GlcNAc...) asparagine). Substrate is bound by residues 61-65 (KPQNT) and lysine 86. Asparagine 100 carries N-linked (GlcNAc...) asparagine glycosylation. Position 105 (arginine 105) interacts with substrate. Histidine 145 serves as the catalytic Proton donor.

This sequence belongs to the pancreatic ribonuclease family. As to quaternary structure, interacts (via N-terminus) with bacterial lipopolysaccharide (LPS).

Its subcellular location is the secreted. It is found in the lysosome. The protein resides in the cytoplasmic granule. Its function is as follows. Ribonuclease which shows a preference for the pyrimidines uridine and cytosine. Has potent antibacterial activity against a range of Gram-positive and Gram-negative bacteria, including P.aeruginosa, A.baumanii, M.luteus, S.aureus, E.faecalis, E.faecium, S.saprophyticus and E.coli. Causes loss of bacterial membrane integrity, and also promotes agglutination of Gram-negative bacteria. Probably contributes to urinary tract sterility. Bactericidal activity is independent of RNase activity. This Aotus trivirgatus (Three-striped night monkey) protein is Ribonuclease K6 (RNASE6).